The sequence spans 618 residues: Arginine--tRNA ligase (618 aa).

A 'HIGH' region motif is present at residues 113–123 (ANPIHPLHIGH).

This sequence belongs to the class-I aminoacyl-tRNA synthetase family.

The protein resides in the cytoplasm. The catalysed reaction is tRNA(Arg) + L-arginine + ATP = L-arginyl-tRNA(Arg) + AMP + diphosphate. This chain is Arginine--tRNA ligase, found in Sulfolobus acidocaldarius (strain ATCC 33909 / DSM 639 / JCM 8929 / NBRC 15157 / NCIMB 11770).